Reading from the N-terminus, the 193-residue chain is Ion-translocating oxidoreductase complex subunit A (193 aa).

Transmembrane regions (helical) follow at residues 5 to 25 (ILLIISTALINNFVLVKFLGL), 39 to 59 (IGMGMATTFVLTVASLSAYLV), 65 to 85 (IPLEAEFLRTLVFILVIAVIV), 102 to 122 (LLGIYLPLITTNCAVLGVALL), 134 to 154 (VLYGFGAAAGFSLVLVLFSAL), and 171 to 191 (SIALITAGLMSLAFMGFTGLV).

It belongs to the NqrDE/RnfAE family. The complex is composed of six subunits: RnfA, RnfB, RnfC, RnfD, RnfE and RnfG.

It is found in the cell inner membrane. Its function is as follows. Part of a membrane-bound complex that couples electron transfer with translocation of ions across the membrane. The sequence is that of Ion-translocating oxidoreductase complex subunit A from Glaesserella parasuis serovar 5 (strain SH0165) (Haemophilus parasuis).